Consider the following 494-residue polypeptide: Glutamyl-tRNA(Gln) amidotransferase subunit A (494 aa).

Active-site charge relay system residues include K78 and S158. The active-site Acyl-ester intermediate is the S182.

This sequence belongs to the amidase family. GatA subfamily. As to quaternary structure, heterotrimer of A, B and C subunits.

The enzyme catalyses L-glutamyl-tRNA(Gln) + L-glutamine + ATP + H2O = L-glutaminyl-tRNA(Gln) + L-glutamate + ADP + phosphate + H(+). Allows the formation of correctly charged Gln-tRNA(Gln) through the transamidation of misacylated Glu-tRNA(Gln) in organisms which lack glutaminyl-tRNA synthetase. The reaction takes place in the presence of glutamine and ATP through an activated gamma-phospho-Glu-tRNA(Gln). The protein is Glutamyl-tRNA(Gln) amidotransferase subunit A of Xanthobacter autotrophicus (strain ATCC BAA-1158 / Py2).